A 310-amino-acid chain; its full sequence is 4-hydroxyproline 2-epimerase (310 aa).

C88 functions as the Proton acceptor in the catalytic mechanism. Substrate-binding positions include 89–90 (GH), H208, and D232. C236 (proton donor) is an active-site residue. 237-238 (GT) is a binding site for substrate.

It belongs to the proline racemase family.

It carries out the reaction trans-4-hydroxy-L-proline = cis-4-hydroxy-D-proline. In terms of biological role, catalyzes the epimerization of trans-4-hydroxy-L-proline (t4LHyp) to cis-4-hydroxy-D-proline (c4DHyp). Is likely involved in a degradation pathway that converts t4LHyp to alpha-ketoglutarate. Displays no proline racemase activity. This is 4-hydroxyproline 2-epimerase from Pseudomonas fluorescens (strain ATCC BAA-477 / NRRL B-23932 / Pf-5).